The sequence spans 371 residues: MPFLSDMLDQSRRQQDEEQALARENLAEASLLQAHLSHRSALRSRFRFDPAAVMDCLRAEVLGQDPALQAVEDMLKVVRADIADPRRPLFSALFLGPTGVGKTEIVRALARALHGDAEGFCRVDMNTLSQEHYAAALTGAPPGYVGAKEGTTLLEQDKLDGSPGRPGIVLFDELEKASPEVVHALLNVLDNGLLRVASGERTYHFRNTLVFMTSNLCAHEIQRYDERRQRLPWRLLPVGGERRRRDIDGMVRARLLKTFSPEFVNRLDSVVTFNWIERDVVARLVELEVQRLNRRLEKHRCRLEATPEVLAKIARAGFDRQFGARALRRSVRHHLEVPLAEHLLDHHQPGDGNCTTYLASLEHERVRFVRR.

Residue Gly-96–Thr-103 participates in ATP binding.

Belongs to the ClpX chaperone family. The cofactor is Mg(2+).

Unlikely to encode a regulatory protein. Has ATPase activity. AmiB and AmiS may act jointly into a two component ABC transporter system. The chain is ATP-dependent protease ATP-binding subunit-like protein AmiB (amiB) from Pseudomonas aeruginosa (strain ATCC 15692 / DSM 22644 / CIP 104116 / JCM 14847 / LMG 12228 / 1C / PRS 101 / PAO1).